The chain runs to 357 residues: N-acetyl-gamma-glutamyl-phosphate reductase (357 aa).

Residue C160 is part of the active site.

This sequence belongs to the NAGSA dehydrogenase family. Type 1 subfamily.

It localises to the cytoplasm. The catalysed reaction is N-acetyl-L-glutamate 5-semialdehyde + phosphate + NADP(+) = N-acetyl-L-glutamyl 5-phosphate + NADPH + H(+). It participates in amino-acid biosynthesis; L-arginine biosynthesis; N(2)-acetyl-L-ornithine from L-glutamate: step 3/4. Its function is as follows. Catalyzes the NADPH-dependent reduction of N-acetyl-5-glutamyl phosphate to yield N-acetyl-L-glutamate 5-semialdehyde. The sequence is that of N-acetyl-gamma-glutamyl-phosphate reductase from Prochlorococcus marinus (strain MIT 9313).